The sequence spans 241 residues: tRNA (guanine-N(7)-)-methyltransferase B (241 aa).

Residues Gly-61, Glu-84, Arg-86, Asn-117, Ala-118, and Leu-137 each coordinate S-adenosyl-L-methionine. Asp-140 is an active-site residue. The alphaC helix stretch occupies residues 141–149 (PHFKKTKHK). Thr-215 and Glu-217 together coordinate S-adenosyl-L-methionine. Residues 215 to 223 (TEEGKKVQR) form an alpha6 helix region.

Belongs to the class I-like SAM-binding methyltransferase superfamily. TrmB family. As to quaternary structure, catalytic component of the METTL1-WDR4 complex, composed of mettl1 and wdr4.

Its subcellular location is the nucleus. It catalyses the reaction guanosine(46) in tRNA + S-adenosyl-L-methionine = N(7)-methylguanosine(46) in tRNA + S-adenosyl-L-homocysteine. It carries out the reaction a guanosine in mRNA + S-adenosyl-L-methionine = an N(7)-methylguanosine in mRNA + S-adenosyl-L-homocysteine. The enzyme catalyses a guanosine in miRNA + S-adenosyl-L-methionine = an N(7)-methylguanosine in miRNA + S-adenosyl-L-homocysteine. The protein operates within tRNA modification; N(7)-methylguanine-tRNA biosynthesis. Its function is as follows. Catalytic component of METTL1-WDR4 methyltransferase complex that mediates the formation of N(7)-methylguanine in a subset of RNA species, such as tRNAs, mRNAs and microRNAs (miRNAs). Catalyzes the formation of N(7)-methylguanine at position 46 (m7G46) in a large subset of tRNAs that contain the 5'-RAGGU-3' motif within the variable loop. M7G46 interacts with C13-G22 in the D-loop to stabilize tRNA tertiary structure and protect tRNAs from decay. Also acts as a methyltransferase for a subset of internal N(7)-methylguanine in mRNAs. Internal N(7)-methylguanine methylation of mRNAs in response to stress promotes their relocalization to stress granules, thereby suppressing their translation. Also methylates a specific subset of miRNAs. This Xenopus tropicalis (Western clawed frog) protein is tRNA (guanine-N(7)-)-methyltransferase B (mettl1-B).